A 489-amino-acid polypeptide reads, in one-letter code: Tandem C2 domains nuclear protein (489 aa).

Serine 82, serine 155, serine 167, serine 173, and serine 210 each carry phosphoserine. Residues 189–214 (DSFSSVPSSSSSRKNSQGSNRSLDTI) are disordered. The segment covering 191–210 (FSSVPSSSSSRKNSQGSNRS) has biased composition (low complexity). Residues threonine 213 and threonine 215 each carry the phosphothreonine modification. Phosphoserine is present on serine 217. 2 C2 domains span residues 222–341 (DLGR…SLEI) and 343–470 (APSK…NQWK). The Nuclear localization signal motif lies at 446 to 448 (RRK).

Its subcellular location is the nucleus. The polypeptide is Tandem C2 domains nuclear protein (Tc2n) (Mus musculus (Mouse)).